The sequence spans 292 residues: Ribonuclease Z (292 aa).

Zn(2+)-binding residues include His60, His62, Asp64, His65, His132, Asp200, and His256. Asp64 (proton acceptor) is an active-site residue.

Belongs to the RNase Z family. Homodimer. Zn(2+) serves as cofactor.

It carries out the reaction Endonucleolytic cleavage of RNA, removing extra 3' nucleotides from tRNA precursor, generating 3' termini of tRNAs. A 3'-hydroxy group is left at the tRNA terminus and a 5'-phosphoryl group is left at the trailer molecule.. Its function is as follows. Zinc phosphodiesterase, which displays some tRNA 3'-processing endonuclease activity. Probably involved in tRNA maturation, by removing a 3'-trailer from precursor tRNA. In Sulfolobus acidocaldarius (strain ATCC 33909 / DSM 639 / JCM 8929 / NBRC 15157 / NCIMB 11770), this protein is Ribonuclease Z.